A 305-amino-acid chain; its full sequence is Ribosomal RNA large subunit methyltransferase F (305 aa).

The protein belongs to the methyltransferase superfamily. METTL16/RlmF family.

The protein localises to the cytoplasm. The catalysed reaction is adenosine(1618) in 23S rRNA + S-adenosyl-L-methionine = N(6)-methyladenosine(1618) in 23S rRNA + S-adenosyl-L-homocysteine + H(+). Functionally, specifically methylates the adenine in position 1618 of 23S rRNA. The sequence is that of Ribosomal RNA large subunit methyltransferase F from Enterobacter sp. (strain 638).